The chain runs to 266 residues: Gasdermin bGSDM (266 aa).

The S-palmitoyl cysteine moiety is linked to residue Cys-3. A run of 4 beta stranded transmembrane segments spans residues 69–85 (ISGQ…GLSI), 97–115 (KLGL…FEFQ), 163–180 (KFTI…ELTI), and 189–205 (GNVK…KICY).

The protein belongs to the bacterial gasdermin family. As to quaternary structure, monomer. Forms large, homooligomeric ring-shaped pores when inserted in membranes. In terms of processing, palmitoylation helps stabilize the inactive state; may self palmitoylate. Palmitoylation plays a significant role in pore formation.

Its subcellular location is the cytoplasm. The protein localises to the cell inner membrane. The full-length protein before cleavage is inactive: intramolecular interactions between the N-terminal domain and the C-terminal region as well as the lipid modification, mediate autoinhibition. The pyroptosis-like-inducing activity is carried by the released N-terminal domain (Gasdermin bGSDM, N-terminus). Its function is as follows. Precursor of a pore-forming protein involved in defense against bacteriophages. Expression of bGSDM and the neighboring protease gene (Ga0182885_104520) is toxic in E.coli. Cleavage of this precursor by its dedicated protease releases the active moiety (gasdermin bGSDM, N-terminus) which inserts into membranes, forming pores and triggering cell death. Functionally, pore-forming protein that causes membrane permeabilization via a pyroptosis-like activity. Makes ring-like pores when released. The protein is Gasdermin bGSDM of Desulfuromonadales bacterium.